A 365-amino-acid chain; its full sequence is ADP-ribosylhydrolase ARH3 (365 aa).

The Mg(2+) site is built by glutamate 42, threonine 77, aspartate 78, and aspartate 79. Residue aspartate 78 coordinates substrate. Substrate-binding positions include 147-153, histidine 183, leucine 236, and isoleucine 272; that span reads KGSYGNG. Residues aspartate 315, aspartate 317, and threonine 318 each coordinate Mg(2+).

This sequence belongs to the ADP-ribosylglycohydrolase family. Monomer. The cofactor is Mg(2+).

It is found in the nucleus. It localises to the cytoplasm. The protein resides in the chromosome. The protein localises to the mitochondrion matrix. The enzyme catalyses [(1''-&gt;2')-ADP-alpha-D-ribose](n) + H2O = [(1''-&gt;2')-ADP-alpha-D-ribose](n-1) + ADP-D-ribose. It carries out the reaction 1''-O-acetyl-ADP-alpha-D-ribose + H2O = ADP-D-ribose + acetate + H(+). It catalyses the reaction O-(ADP-D-ribosyl)-L-seryl-[protein] + H2O = ADP-D-ribose + L-seryl-[protein]. The catalysed reaction is alpha-NAD(+) + H2O = ADP-D-ribose + nicotinamide + H(+). The protein undergoes a dramatic conformational switch from closed to open states upon substrate-binding, which enables specific substrate recognition for the 1''-O-linkage. The glutamate flap (Glu-42) blocks substrate entrance to Mg(2+) in the unliganded closed state. In presence of substrate, Glu-42 is ejected from the active site: this closed-to-open transition significantly widens the substrate-binding channel and precisely positions the scissile 1''-O-linkage for cleavage while securing tightly 2'- and 3'-hydroxyls of ADP-ribose. ADP-ribosylhydrolase that preferentially hydrolyzes the scissile alpha-O-linkage attached to the anomeric C1'' position of ADP-ribose and acts on different substrates, such as proteins ADP-ribosylated on serine and threonine, free poly(ADP-ribose) and O-acetyl-ADP-D-ribose. Specifically acts as a serine mono-ADP-ribosylhydrolase by mediating the removal of mono-ADP-ribose attached to serine residues on proteins, thereby playing a key role in DNA damage response. Serine ADP-ribosylation of proteins constitutes the primary form of ADP-ribosylation of proteins in response to DNA damage. Does not hydrolyze ADP-ribosyl-arginine, -cysteine, -diphthamide, or -asparagine bonds. Also able to degrade protein free poly(ADP-ribose), which is synthesized in response to DNA damage: free poly(ADP-ribose) acts as a potent cell death signal and its degradation by ADPRHL2 protects cells from poly(ADP-ribose)-dependent cell death, a process named parthanatos. Also hydrolyzes free poly(ADP-ribose) in mitochondria. Specifically digests O-acetyl-ADP-D-ribose, a product of deacetylation reactions catalyzed by sirtuins. Specifically degrades 1''-O-acetyl-ADP-D-ribose isomer, rather than 2''-O-acetyl-ADP-D-ribose or 3''-O-acetyl-ADP-D-ribose isomers. This is ADP-ribosylhydrolase ARH3 (ADPRS) from Bos taurus (Bovine).